Here is a 765-residue protein sequence, read N- to C-terminus: LPS-assembly protein LptD (765 aa).

The first 18 residues, 1–18 (MQIRYLLALSLLPKLVLA), serve as a signal peptide directing secretion.

The protein belongs to the LptD family. In terms of assembly, component of the lipopolysaccharide transport and assembly complex. Interacts with LptE and LptA.

It localises to the cell outer membrane. Functionally, together with LptE, is involved in the assembly of lipopolysaccharide (LPS) at the surface of the outer membrane. This chain is LPS-assembly protein LptD, found in Shewanella oneidensis (strain ATCC 700550 / JCM 31522 / CIP 106686 / LMG 19005 / NCIMB 14063 / MR-1).